A 125-amino-acid chain; its full sequence is Large ribosomal subunit protein bL12 (125 aa).

It belongs to the bacterial ribosomal protein bL12 family. In terms of assembly, homodimer. Part of the ribosomal stalk of the 50S ribosomal subunit. Forms a multimeric L10(L12)X complex, where L10 forms an elongated spine to which 2 to 4 L12 dimers bind in a sequential fashion. Binds GTP-bound translation factors.

Functionally, forms part of the ribosomal stalk which helps the ribosome interact with GTP-bound translation factors. Is thus essential for accurate translation. This chain is Large ribosomal subunit protein bL12, found in Polaromonas sp. (strain JS666 / ATCC BAA-500).